Consider the following 505-residue polypeptide: Oxidative stress-induced growth inhibitor 2 (505 aa).

The protein belongs to the OKL38 family. NADPH serves as cofactor. As to expression, ubiquitous. Expressed at higher levels in testis and ovary.

The protein resides in the midbody. Monooxygenase catalytic activity. May be involved in meiosis or the maturation of germ cells. This Homo sapiens (Human) protein is Oxidative stress-induced growth inhibitor 2.